A 323-amino-acid chain; its full sequence is tRNA dimethylallyltransferase (323 aa).

Position 12 to 19 (12 to 19) interacts with ATP; that stretch reads GPTAAGKT. 14-19 contributes to the substrate binding site; it reads TAAGKT. Interaction with substrate tRNA stretches follow at residues 37–40 and 161–165; these read DSAL and QRLIR.

It belongs to the IPP transferase family. In terms of assembly, monomer. The cofactor is Mg(2+).

The enzyme catalyses adenosine(37) in tRNA + dimethylallyl diphosphate = N(6)-dimethylallyladenosine(37) in tRNA + diphosphate. Functionally, catalyzes the transfer of a dimethylallyl group onto the adenine at position 37 in tRNAs that read codons beginning with uridine, leading to the formation of N6-(dimethylallyl)adenosine (i(6)A). The sequence is that of tRNA dimethylallyltransferase from Pseudomonas putida (strain ATCC 700007 / DSM 6899 / JCM 31910 / BCRC 17059 / LMG 24140 / F1).